Consider the following 880-residue polypeptide: Leucine--tRNA ligase (880 aa).

The short motif at 46 to 56 is the 'HIGH' region element; sequence PYPSGALHMGH. A 'KMSKS' region motif is present at residues 638–642; that stretch reads KMSKS. Residue lysine 641 participates in ATP binding.

The protein belongs to the class-I aminoacyl-tRNA synthetase family.

It localises to the cytoplasm. The enzyme catalyses tRNA(Leu) + L-leucine + ATP = L-leucyl-tRNA(Leu) + AMP + diphosphate. This chain is Leucine--tRNA ligase, found in Xanthomonas axonopodis pv. citri (strain 306).